The primary structure comprises 428 residues: tRNA(Ile)-lysidine synthase (428 aa).

ATP is bound at residue 25–30 (SGGIDS).

The protein belongs to the tRNA(Ile)-lysidine synthase family.

Its subcellular location is the cytoplasm. It carries out the reaction cytidine(34) in tRNA(Ile2) + L-lysine + ATP = lysidine(34) in tRNA(Ile2) + AMP + diphosphate + H(+). Functionally, ligates lysine onto the cytidine present at position 34 of the AUA codon-specific tRNA(Ile) that contains the anticodon CAU, in an ATP-dependent manner. Cytidine is converted to lysidine, thus changing the amino acid specificity of the tRNA from methionine to isoleucine. The sequence is that of tRNA(Ile)-lysidine synthase from Haemophilus ducreyi (strain 35000HP / ATCC 700724).